Reading from the N-terminus, the 277-residue chain is Carbonyl reductase [NADPH] 3 (277 aa).

S2 carries the N-acetylserine modification. NADP(+) contacts are provided by residues 10–34 (VTGANKGIGFAITRDLCRKFSGDVV), 38–42 (RDEAR), 63–64 (DI), and N90. Residue S30 is modified to Phosphoserine. S140 contacts substrate. The active-site Proton acceptor is the Y194. Residue 194–198 (YGVSK) participates in NADP(+) binding.

Belongs to the short-chain dehydrogenases/reductases (SDR) family.

It localises to the cytoplasm. It catalyses the reaction a secondary alcohol + NADP(+) = a ketone + NADPH + H(+). It carries out the reaction a quinone + NADPH + H(+) = a quinol + NADP(+). Its function is as follows. Catalyzes the NADPH-dependent reduction of carbonyl compounds to their corresponding alcohols. Has low NADPH-dependent oxidoreductase activity. Acts on several orthoquinones, as well as on non-quinone compounds, such as isatin or on the anticancer drug oracin. Best substrates for CBR3 is 1,2- naphthoquinone, hence could play a role in protection against cytotoxicity of exogenous quinones. Exerts activity toward ortho-quinones but not paraquinones. No endogenous substrate for CBR3 except isatin has been identified. This Mus musculus (Mouse) protein is Carbonyl reductase [NADPH] 3 (Cbr3).